Consider the following 159-residue polypeptide: Probable epoxidase scpX (159 aa).

Positions Met-1–Asp-25 are cleaved as a signal peptide. Helical transmembrane passes span Trp-59 to Ser-79 and Leu-96 to Ile-116. Residues Asn-124 and Asn-136 are each glycosylated (N-linked (GlcNAc...) asparagine). A helical membrane pass occupies residues Arg-139–Leu-159.

The protein belongs to the epoxidase xenD family.

The protein resides in the membrane. It participates in mycotoxin biosynthesis. In terms of biological role, probable epoxidase; part of the gene scp cluster that mediates the biosynthesis of a hirsutellone-like compound that has still to be identified. The polypeptide is Probable epoxidase scpX (Mollisia scopiformis (Conifer needle endophyte fungus)).